Consider the following 339-residue polypeptide: Immunoglobulin-binding protein 1 (339 aa).

Residue Ala-2 is modified to N-acetylalanine. One can recognise a UIM domain in the interval 46–60; the sequence is LDLLEKAAEMLSQLD. The interval 98 to 202 is interaction with PPP2CA; that stretch reads RLDHLQRARE…YLLHLQRWID (105 aa). 2 disordered regions span residues 221 to 243 and 289 to 339; these read RDSS…VKPF and APEE…QNMG. Positions 225-290 are interaction with MID1; it reads REASTSNSSR…PDQGIAKAAP (66 aa). Lys-241 is modified (N6-acetyllysine). Residues 301–312 are compositionally biased toward acidic residues; that stretch reads EEQEEKEEEDDE. Residues 313-329 are compositionally biased toward basic and acidic residues; sequence QTLHRAREWDDWKDTHP.

It belongs to the IGBP1/TAP42 family. In terms of assembly, interacts with partially folded PPP2CA, but not with the fully active protein. Interacts with PPP2CB, and with PP4 and PP6. Interacts with MID1 and MID2. Interacts with ubiquitin. Phosphorylated. In terms of processing, monoubiquitination by MID1 triggers calpain-mediated cleavage and switches IGBP1 activity from protective to destructive. As to expression, ubiquitously expressed with highest levels in heart, skeletal muscle and pancreas.

Its subcellular location is the cytoplasm. Its function is as follows. Associated to surface IgM-receptor; may be involved in signal transduction. Involved in regulation of the catalytic activity of the phosphatases PP2A, PP4 and PP6 by protecting their partially folded catalytic subunits from degradative polyubiquitination until they associate with regulatory subunits. The polypeptide is Immunoglobulin-binding protein 1 (IGBP1) (Homo sapiens (Human)).